Consider the following 630-residue polypeptide: Chaperone protein HtpG (630 aa).

Residues 1–339 form an a; substrate-binding region; that stretch reads MKGQETRGFQ…SNDLPLNVSR (339 aa). The interval 340–555 is b; the sequence is EILQDNSITR…VDEMSTQMAK (216 aa). Residues 556–630 form a c region; sequence LFAAAGQQVP…MNQLLLSEKA (75 aa).

The protein belongs to the heat shock protein 90 family. In terms of assembly, homodimer.

It localises to the cytoplasm. Molecular chaperone. Has ATPase activity. The sequence is that of Chaperone protein HtpG from Photorhabdus laumondii subsp. laumondii (strain DSM 15139 / CIP 105565 / TT01) (Photorhabdus luminescens subsp. laumondii).